Here is a 772-residue protein sequence, read N- to C-terminus: Nudix hydrolase 3 (772 aa).

Over residues 1-14 (MAEEHFDVLTKSGE) the composition is skewed to basic and acidic residues. Positions 1–25 (MAEEHFDVLTKSGEKTGVSKPRGEV) are disordered. In terms of domain architecture, Nudix hydrolase spans 30-172 (DYHRAVHVWI…DPAYVPYDVN (143 aa)). Positions 69 to 90 (GHISAGDTSLLSAQRELEEELG) match the Nudix box motif. The Mg(2+) site is built by Glu-84 and Glu-88.

This sequence belongs to the Nudix hydrolase family. Requires Mg(2+) as cofactor. It depends on Mn(2+) as a cofactor. As to expression, expressed in roots, stems and, at lower level, leaves.

Probably mediates the hydrolysis of some nucleoside diphosphate derivatives. This chain is Nudix hydrolase 3 (NUDT3), found in Arabidopsis thaliana (Mouse-ear cress).